The sequence spans 110 residues: Protein RnfH (110 aa).

The disordered stretch occupies residues 86–110 (RQRRVEKSRQEGSVEGRKWLPKDSR). The segment covering 88 to 110 (RRVEKSRQEGSVEGRKWLPKDSR) has biased composition (basic and acidic residues).

It belongs to the UPF0125 (RnfH) family.

In Paraburkholderia phymatum (strain DSM 17167 / CIP 108236 / LMG 21445 / STM815) (Burkholderia phymatum), this protein is Protein RnfH.